Here is a 435-residue protein sequence, read N- to C-terminus: Eukaryotic translation initiation factor 3 subunit E (435 aa).

Positions F219–L392 constitute a PCI domain.

The protein belongs to the eIF-3 subunit E family. As to quaternary structure, component of the eukaryotic translation initiation factor 3 (eIF-3) complex. The eIF-3 complex interacts with pix. Interacts with mxt.

The protein localises to the cytoplasm. Component of the eukaryotic translation initiation factor 3 (eIF-3) complex, which is involved in protein synthesis of a specialized repertoire of mRNAs and, together with other initiation factors, stimulates binding of mRNA and methionyl-tRNAi to the 40S ribosome. The eIF-3 complex specifically targets and initiates translation of a subset of mRNAs involved in cell proliferation. The chain is Eukaryotic translation initiation factor 3 subunit E (eIF3-S6) from Drosophila erecta (Fruit fly).